A 227-amino-acid polypeptide reads, in one-letter code: Probable septum site-determining protein MinC (227 aa).

It belongs to the MinC family. As to quaternary structure, interacts with MinD and FtsZ.

In terms of biological role, cell division inhibitor that blocks the formation of polar Z ring septums. Rapidly oscillates between the poles of the cell to destabilize FtsZ filaments that have formed before they mature into polar Z rings. Prevents FtsZ polymerization. This Bacillus pumilus (strain SAFR-032) protein is Probable septum site-determining protein MinC.